A 414-amino-acid chain; its full sequence is Esterase FrsA (414 aa).

Belongs to the FrsA family.

It catalyses the reaction a carboxylic ester + H2O = an alcohol + a carboxylate + H(+). Its function is as follows. Catalyzes the hydrolysis of esters. This is Esterase FrsA from Escherichia coli O45:K1 (strain S88 / ExPEC).